The sequence spans 284 residues: Deoxyribonuclease-1 (284 aa).

The signal sequence occupies residues 1 to 22 (MRAARLMGALLALAGLLQLALS). N-linked (GlcNAc...) asparagine glycosylation occurs at Asn40. The active site involves Glu100. An intrachain disulfide couples Cys123 to Cys126. Asn128 carries an N-linked (GlcNAc...) asparagine glycan. Residue His156 is part of the active site. A disulfide bridge connects residues Cys195 and Cys231.

It belongs to the DNase I family. The cofactor is Ca(2+). Mg(2+) serves as cofactor.

The protein resides in the secreted. The protein localises to the zymogen granule. It localises to the nucleus envelope. The enzyme catalyses Endonucleolytic cleavage to 5'-phosphodinucleotide and 5'-phosphooligonucleotide end-products.. In terms of biological role, serum endocuclease secreted into body fluids by a wide variety of exocrine and endocrine organs. Expressed by non-hematopoietic tissues and preferentially cleaves protein-free DNA. Among other functions, seems to be involved in cell death by apoptosis. Binds specifically to G-actin and blocks actin polymerization. Together with DNASE1L3, plays a key role in degrading neutrophil extracellular traps (NETs). NETs are mainly composed of DNA fibers and are released by neutrophils to bind pathogens during inflammation. Degradation of intravascular NETs by DNASE1 and DNASE1L3 is required to prevent formation of clots that obstruct blood vessels and cause organ damage following inflammation. The sequence is that of Deoxyribonuclease-1 (DNASE1) from Sus scrofa (Pig).